A 152-amino-acid chain; its full sequence is FAD synthase (152 aa).

ATP-binding positions include 9 to 10 (TF), 14 to 17 (HPGH), and aspartate 92.

The protein belongs to the archaeal FAD synthase family. As to quaternary structure, homodimer. Requires a divalent metal cation as cofactor.

It catalyses the reaction FMN + ATP + H(+) = FAD + diphosphate. Its pathway is cofactor biosynthesis; FAD biosynthesis; FAD from FMN: step 1/1. In terms of biological role, catalyzes the transfer of the AMP portion of ATP to flavin mononucleotide (FMN) to produce flavin adenine dinucleotide (FAD) coenzyme. This chain is FAD synthase, found in Ferroglobus placidus (strain DSM 10642 / AEDII12DO).